The primary structure comprises 1314 residues: Ubinuclein-2 (1314 aa).

The interval 1–113 (MAEPRRVAFI…PPPRPPKETV (113 aa)) is disordered. Ser-13 bears the Phosphoserine mark. 2 stretches are compositionally biased toward basic and acidic residues: residues 16-31 (RRRE…EPPR) and 55-67 (ARDK…EVSR). Residues 81–96 (PEPPPPPLPLQTPPPR) show a composition bias toward pro residues. At Thr-229 the chain carries Phosphothreonine. Ser-236 carries the phosphoserine modification. The tract at residues 236–288 (SDTEEDDFTDNQKHKPPKVPKIKEDDIEVKKRKRKEEGEKEKKPRKKVPKQLG) is disordered. Thr-238 is modified (phosphothreonine). Lys-258 participates in a covalent cross-link: Glycyl lysine isopeptide (Lys-Gly) (interchain with G-Cter in SUMO2). Ser-297 bears the Phosphoserine mark. Disordered stretches follow at residues 322-345 (DALK…PKPP), 400-424 (ATSD…TFPS), 559-584 (LQAD…RVIG), 657-709 (LTSA…ASAS), 785-818 (ATPK…DLAH), 849-893 (GLQR…SLTQ), 948-975 (YRLP…APST), 1003-1185 (ASPK…GSSV), and 1288-1314 (PLPA…RKPQ). Residues 330 to 341 (PKVPVTPSSSSL) show a composition bias toward low complexity. 3 positions are modified to phosphoserine: Ser-402, Ser-405, and Ser-408. The segment covering 415 to 424 (GNTTHPTFPS) has biased composition (polar residues). 2 stretches are compositionally biased toward basic and acidic residues: residues 560 to 570 (QADEEREKNGS) and 673 to 684 (KVKECSPKKDPK). Residue Ser-570 is modified to Phosphoserine. Positions 685–709 (APASVVASGGGPSTSSSTSIVASAS) are enriched in low complexity. Residues 792-801 (STQTAHSSSL) are compositionally biased toward polar residues. The segment covering 849-879 (GLQRSSQIHASSSSQTHVSSSQAQAAASSHA) has biased composition (low complexity). The segment covering 883 to 893 (SEAQDASSLTQ) has biased composition (polar residues). A compositionally biased stretch (low complexity) spans 1003 to 1013 (ASPKLAASPKP). Residues 1014–1028 (ATSPKPLPSPKPSVS) are compositionally biased toward pro residues. Over residues 1029–1040 (PKPSLSAKPSIS) the composition is skewed to low complexity. The residue at position 1036 (Lys-1036) is an N6-acetyllysine. Polar residues-rich tracts occupy residues 1057-1132 (PSSS…NSLS) and 1142-1153 (RGSNLNSSGANR). Ser-1091 is modified (phosphoserine). Position 1116 is an N6-acetyllysine (Lys-1116). Positions 1305–1314 (GDTKLPRKPQ) are enriched in basic and acidic residues.

This sequence belongs to the ubinuclein family.

The chain is Ubinuclein-2 (Ubn2) from Mus musculus (Mouse).